The primary structure comprises 308 residues: uncharacterized protein (308 aa).

The active site involves Glu59.

This sequence belongs to the PhzF family.

This is an uncharacterized protein from Deinococcus radiodurans (strain ATCC 13939 / DSM 20539 / JCM 16871 / CCUG 27074 / LMG 4051 / NBRC 15346 / NCIMB 9279 / VKM B-1422 / R1).